The following is a 130-amino-acid chain: Zinc finger A20 and AN1 domain-containing stress-associated protein 10 (130 aa).

An A20-type zinc finger spans residues 4–38; the sequence is ETEALPCEGGCGLYGTRVNNNLCSLCYKKSVLQHS. Residues C10, C14, C26, C29, C71, C74, C85, C87, C92, H95, H101, and C103 each contribute to the Zn(2+) site. Residues 65-111 form an AN1-type zinc finger; the sequence is PVKKRRCGICKRKVGMLGFKCRCGHMFCGSHRYPEEHSCPFDYKQSG.

In terms of biological role, may be involved in environmental stress response. The polypeptide is Zinc finger A20 and AN1 domain-containing stress-associated protein 10 (SAP10) (Arabidopsis thaliana (Mouse-ear cress)).